The primary structure comprises 319 residues: Acetyl-coenzyme A carboxylase carboxyl transferase subunit alpha (319 aa).

In terms of domain architecture, CoA carboxyltransferase C-terminal spans 39-293 (RLQKKSNDLT…KAVLEKQLHE (255 aa)).

The protein belongs to the AccA family. In terms of assembly, acetyl-CoA carboxylase is a heterohexamer composed of biotin carboxyl carrier protein (AccB), biotin carboxylase (AccC) and two subunits each of ACCase subunit alpha (AccA) and ACCase subunit beta (AccD).

The protein localises to the cytoplasm. The catalysed reaction is N(6)-carboxybiotinyl-L-lysyl-[protein] + acetyl-CoA = N(6)-biotinyl-L-lysyl-[protein] + malonyl-CoA. Its pathway is lipid metabolism; malonyl-CoA biosynthesis; malonyl-CoA from acetyl-CoA: step 1/1. Functionally, component of the acetyl coenzyme A carboxylase (ACC) complex. First, biotin carboxylase catalyzes the carboxylation of biotin on its carrier protein (BCCP) and then the CO(2) group is transferred by the carboxyltransferase to acetyl-CoA to form malonyl-CoA. In Neisseria gonorrhoeae (strain ATCC 700825 / FA 1090), this protein is Acetyl-coenzyme A carboxylase carboxyl transferase subunit alpha.